Here is a 196-residue protein sequence, read N- to C-terminus: Probable malonic semialdehyde reductase RutE (196 aa).

The protein belongs to the nitroreductase family. HadB/RutE subfamily. Requires FMN as cofactor.

The catalysed reaction is 3-hydroxypropanoate + NADP(+) = 3-oxopropanoate + NADPH + H(+). Functionally, may reduce toxic product malonic semialdehyde to 3-hydroxypropionic acid, which is excreted. This Cronobacter sakazakii (strain ATCC BAA-894) (Enterobacter sakazakii) protein is Probable malonic semialdehyde reductase RutE.